A 343-amino-acid polypeptide reads, in one-letter code: Twinfilin (343 aa).

2 consecutive ADF-H domains span residues 11-135 (EQLA…EGYR) and 184-312 (EATV…DELH). Residues 319-343 (RPAFAKPKGPPNRGAKRLTRPTAED) form a disordered region.

This sequence belongs to the actin-binding proteins ADF family. Twinfilin subfamily. Interacts with G-actin; ADP-actin form.

It localises to the cytoplasm. The protein resides in the cytoskeleton. Its subcellular location is the cell cortex. Its function is as follows. Actin-binding protein involved in motile and morphological processes. Inhibits actin polymerization, likely by sequestering G-actin. The polypeptide is Twinfilin (twf) (Drosophila melanogaster (Fruit fly)).